The sequence spans 70 residues: NAD(P)H-quinone oxidoreductase subunit O (70 aa).

This sequence belongs to the complex I NdhO subunit family. NDH-1 can be composed of about 15 different subunits; different subcomplexes with different compositions have been identified which probably have different functions.

The protein localises to the cellular thylakoid membrane. The enzyme catalyses a plastoquinone + NADH + (n+1) H(+)(in) = a plastoquinol + NAD(+) + n H(+)(out). It catalyses the reaction a plastoquinone + NADPH + (n+1) H(+)(in) = a plastoquinol + NADP(+) + n H(+)(out). Functionally, NDH-1 shuttles electrons from an unknown electron donor, via FMN and iron-sulfur (Fe-S) centers, to quinones in the respiratory and/or the photosynthetic chain. The immediate electron acceptor for the enzyme in this species is believed to be plastoquinone. Couples the redox reaction to proton translocation, and thus conserves the redox energy in a proton gradient. Cyanobacterial NDH-1 also plays a role in inorganic carbon-concentration. This Trichormus variabilis (strain ATCC 29413 / PCC 7937) (Anabaena variabilis) protein is NAD(P)H-quinone oxidoreductase subunit O.